The following is a 214-amino-acid chain: ATP phosphoribosyltransferase (214 aa).

This sequence belongs to the ATP phosphoribosyltransferase family. Short subfamily. In terms of assembly, heteromultimer composed of HisG and HisZ subunits.

The protein resides in the cytoplasm. It catalyses the reaction 1-(5-phospho-beta-D-ribosyl)-ATP + diphosphate = 5-phospho-alpha-D-ribose 1-diphosphate + ATP. It participates in amino-acid biosynthesis; L-histidine biosynthesis; L-histidine from 5-phospho-alpha-D-ribose 1-diphosphate: step 1/9. Catalyzes the condensation of ATP and 5-phosphoribose 1-diphosphate to form N'-(5'-phosphoribosyl)-ATP (PR-ATP). Has a crucial role in the pathway because the rate of histidine biosynthesis seems to be controlled primarily by regulation of HisG enzymatic activity. In Alcanivorax borkumensis (strain ATCC 700651 / DSM 11573 / NCIMB 13689 / SK2), this protein is ATP phosphoribosyltransferase.